Here is a 310-residue protein sequence, read N- to C-terminus: Olfactory receptor 5P1 (310 aa).

Topologically, residues 1–25 (MEPGNHTAVTKFILLGLTDDPTLCV) are extracellular. N-linked (GlcNAc...) asparagine glycosylation occurs at asparagine 5. Residues 26–46 (IFFVFFLGIYIVTLVGNISII) traverse the membrane as a helical segment. At 47–54 (NLVRSCPQ) the chain is on the cytoplasmic side. A helical membrane pass occupies residues 55 to 75 (LQTPMYMFLSHLAFVDIGYST). Topologically, residues 76–99 (SVTPIMLIGFIVHETGLPVHACEA) are extracellular. An intrachain disulfide couples cysteine 97 to cysteine 189. Residues 100–120 (QLCSVVTFGTAECFLLAAMAY) traverse the membrane as a helical segment. At 121 to 133 (DRYVAICSPLLYS) the chain is on the cytoplasmic side. The helical transmembrane segment at 134–154 (THMSSQICLLLVGASYVGGCV) threads the bilayer. At 155–196 (NAWTFTGCLLSLSFCGPNKIDHFFCDFSPLLKLSCSDVSIIG) the chain is on the extracellular side. A helical membrane pass occupies residues 197 to 217 (IIPSISAGSIIVVTVFVISVS). The Cytoplasmic segment spans residues 218–237 (YIYILITILKMRSTEGRHKA). Residues 238-258 (FSTCTSHLTAVTLYYGTITFI) traverse the membrane as a helical segment. The Extracellular segment spans residues 259-271 (YVMPKSSYSTKQN). Residues 272–292 (RVVSLFYTVVIPMLNPLIYSL) traverse the membrane as a helical segment. Over 293–310 (RNRDVKEALRKATLRIYS) the chain is Cytoplasmic.

This sequence belongs to the G-protein coupled receptor 1 family.

The protein resides in the cell membrane. Potential odorant receptor. This chain is Olfactory receptor 5P1, found in Mus musculus (Mouse).